The chain runs to 60 residues: Large ribosomal subunit protein bL32 (60 aa).

The protein belongs to the bacterial ribosomal protein bL32 family.

This chain is Large ribosomal subunit protein bL32, found in Clostridium acetobutylicum (strain ATCC 824 / DSM 792 / JCM 1419 / IAM 19013 / LMG 5710 / NBRC 13948 / NRRL B-527 / VKM B-1787 / 2291 / W).